The primary structure comprises 739 residues: Catalase-peroxidase (739 aa).

Positions methionine 1 to glutamine 20 are disordered. A cross-link (tryptophyl-tyrosyl-methioninium (Trp-Tyr) (with M-243)) is located at residues tryptophan 94–tyrosine 217. The active-site Proton acceptor is the histidine 95. The segment at residues tyrosine 217–methionine 243 is a cross-link (tryptophyl-tyrosyl-methioninium (Tyr-Met) (with W-94)). Heme b is bound at residue histidine 258.

It belongs to the peroxidase family. Peroxidase/catalase subfamily. As to quaternary structure, homodimer or homotetramer. Heme b is required as a cofactor. Formation of the three residue Trp-Tyr-Met cross-link is important for the catalase, but not the peroxidase activity of the enzyme.

Its subcellular location is the cytoplasm. It carries out the reaction H2O2 + AH2 = A + 2 H2O. It catalyses the reaction 2 H2O2 = O2 + 2 H2O. Functionally, bifunctional enzyme with both catalase and broad-spectrum peroxidase activity. This chain is Catalase-peroxidase, found in Emericella nidulans (strain FGSC A4 / ATCC 38163 / CBS 112.46 / NRRL 194 / M139) (Aspergillus nidulans).